A 107-amino-acid polypeptide reads, in one-letter code: Endonuclease ALBA3 (107 aa).

Lys23 and Lys32 each carry N6-acetyllysine.

This sequence belongs to the histone-like Alba family. Homodimer. Interacts (acetylated and unacetylated) with Sir2A. A divalent metal cation is required as a cofactor. In terms of processing, acetylated. Exists in both acetylated and unacetylated forms but predominantly in an acetylated form. Deacetylated by Sir2A.

It localises to the nucleus. It is found in the chromosome. Its subcellular location is the telomere. The protein resides in the cytoplasm. Mild acetylation lowers protein interaction with DNA and high acetylation abolishes DNA-binding activity. DNA binding and endonuclease activity is modulated via deacetylation of Lys-23 by Sir2A. Inhibited in the presence of EDTA and EGTA. Functionally, possesses DNA-binding and endonuclease activities. Binds DNA cooperatively in sequence-independent manner at the DNA minor groove. Exhibits apurinic/apyrimidinic site-driven endonuclease activity. Binds RNA; shows high affinity for poly(A) and a lower affinity for poly(U) templates. In vitro, prevents transcription after DNA binding. Associates with the telomeric region, the subtelomeric TARE6 repeat sequence and the var gene promoters. This Plasmodium falciparum (isolate 3D7) protein is Endonuclease ALBA3.